Here is a 2104-residue protein sequence, read N- to C-terminus: Transmembrane matrix receptor MUP-4 (2104 aa).

The N-terminal stretch at 1 to 15 (MRWVPLVLLPLIASA) is a signal peptide. Residues 16–1860 (ATTYQHRQTY…FCETAPSNLP (1845 aa)) are Extracellular-facing. 3 consecutive EGF-like domains span residues 71 to 110 (VVNE…TSPD), 122 to 163 (TTNE…VSTS), and 175 to 213 (SVNE…ASPN). 6 disulfides stabilise this stretch: cysteine 75–cysteine 89, cysteine 83–cysteine 98, cysteine 126–cysteine 142, cysteine 136–cysteine 151, cysteine 179–cysteine 192, and cysteine 186–cysteine 201. The WR1 domain occupies 220–265 (RVCNKPKAPEYYGQQSRQPQCSEGSGCGPNEECRFNTAGEKVCQCR). 3 consecutive EGF-like domains span residues 278-315 (VFSQ…VSPD), 327-360 (VRNE…SNCI), and 377-416 (AANQ…VSSN). Cystine bridges form between cysteine 282/cysteine 294, cysteine 288/cysteine 303, cysteine 331/cysteine 344, cysteine 338/cysteine 353, cysteine 355/cysteine 359, cysteine 381/cysteine 395, and cysteine 389/cysteine 404. The 176-residue stretch at 437–612 (DLVFLIDGSG…DLNTRLRSAI (176 aa)) folds into the VWFA domain. N-linked (GlcNAc...) asparagine glycans are attached at residues asparagine 494 and asparagine 556. EGF-like domains follow at residues 728 to 772 (SNDE…NKCE) and 819 to 857 (LIDE…KSPE). Cystine bridges form between cysteine 732–cysteine 746, cysteine 740–cysteine 756, cysteine 758–cysteine 771, cysteine 823–cysteine 836, cysteine 830–cysteine 845, cysteine 873–cysteine 886, cysteine 880–cysteine 895, cysteine 923–cysteine 937, cysteine 931–cysteine 946, cysteine 972–cysteine 985, cysteine 979–cysteine 995, cysteine 1020–cysteine 1034, cysteine 1028–cysteine 1046, cysteine 1075–cysteine 1089, cysteine 1083–cysteine 1098, cysteine 1125–cysteine 1139, cysteine 1133–cysteine 1148, cysteine 1173–cysteine 1187, cysteine 1181–cysteine 1196, cysteine 1219–cysteine 1233, and cysteine 1227–cysteine 1242. In terms of domain architecture, EGF-like 9; calcium-binding spans 869-907 (QRNECLDGTHNCSMNADCIDLPDGFLCRCKEDFVDISPN). Asparagine 879 is a glycosylation site (N-linked (GlcNAc...) asparagine). EGF-like domains are found at residues 919-958 (LVNE…HDEL), 968-1007 (LNQI…KSPL), 1016-1058 (VEPI…VGAV), 1071-1110 (LVNE…ESPV), 1121-1160 (LVNE…QKPE), 1169-1208 (IINE…EMPS), and 1215-1254 (RFDE…EISD). N-linked (GlcNAc...) asparagine glycosylation occurs at asparagine 1037. The N-linked (GlcNAc...) asparagine glycan is linked to asparagine 1132. Residues asparagine 1271, asparagine 1403, and asparagine 1576 are each glycosylated (N-linked (GlcNAc...) asparagine). SEA domains follow at residues 1322–1444 (PTTS…DDAD) and 1495–1620 (AVES…PEQL). EGF-like domains are found at residues 1622–1658 (PFSN…LNPS), 1669–1705 (GVNE…YVNS), and 1717–1754 (SIDY…LRKS). Intrachain disulfides connect cysteine 1626/cysteine 1637, cysteine 1631/cysteine 1646, cysteine 1673/cysteine 1687, cysteine 1681/cysteine 1696, cysteine 1721/cysteine 1733, cysteine 1727/cysteine 1742, cysteine 1776/cysteine 1789, cysteine 1783/cysteine 1798, cysteine 1821/cysteine 1830, cysteine 1824/cysteine 1841, and cysteine 1843/cysteine 1852. N-linked (GlcNAc...) asparagine glycosylation is found at asparagine 1730 and asparagine 1782. One can recognise an EGF-like 20; calcium-binding domain in the interval 1772-1810 (DIDECALGLHNCSAAAICIDKKIGYECQCQEGYEDGNPS). Positions 1817-1853 (AASLCGLCNGHGDCIHDALSSNVTCACLDGYTGQFCE) constitute an EGF-like 21 domain. The N-linked (GlcNAc...) asparagine glycan is linked to asparagine 1838. A helical membrane pass occupies residues 1861-1881 (LILMTLLALLFLLLTLLCCLY). The Cytoplasmic portion of the chain corresponds to 1882–2104 (MCARCRCFGA…TTKAEEVNYF (223 aa)). The segment covering 2031-2040 (SGAMMSSASG) has biased composition (low complexity). Residues 2031-2104 (SGAMMSSASG…TTKAEEVNYF (74 aa)) form a disordered region. Basic and acidic residues-rich tracts occupy residues 2062–2076 (VYDR…HDFE) and 2083–2104 (TGTE…VNYF).

Abundant at hypodermal cell-matrix junctions overlying muscle of threefold embryos. Expression continues in body wall muscle in larvae and adults and is also detected in other regions where cells show mechanical attachment to the hypodermis including the inner surface of the pharynx, overlying anal and intestinal muscles, overlying vulval and uterine sex muscles, male tail muscle attachment zones and the six mechanosensory neurons (at protein level).

It is found in the cell junction. The protein localises to the hemidesmosome. It localises to the cytoplasm. Its subcellular location is the cytoskeleton. The protein resides in the cell membrane. In terms of biological role, required for junctional attachments between hypodermis and muscle, and between the apical epithelial surface and the cuticular matrix. Essential for enclosure of the embryo by the hypodermis, hypodermal integrity, embryo elongation, and maintenance of hypodermal morphology in fully elongated embryos. This chain is Transmembrane matrix receptor MUP-4, found in Caenorhabditis elegans.